The chain runs to 463 residues: MGKEKVHINIVVIGHVDSGKSTTTGHLIYKCGGIDKRTIEKFEKEAQEMGKGSFKYAWVLDKLKAERERGITIDIALWKFETAKYYITIIDAPGHRDFIKNMITGTSQADCAVLVVACGTGEFEAGISKNGQTREHALLAQTLGVKQLIVACNKMDSTEPPFSEARFTEITNEVSGFIKKIGYNPKAVPFVPISGFNGDNMLEVSSNMPWFKGWAVERKEGNASGKTLLEALDSIIPPQRPTDRPLRLPLQDVYKIGGIGTVPVGRVETGIIKPGMVVTFAPQNVTTEVKSVEMHHESLPEAVPGDNVGFNVKNVSVKDIRRGSVCSDSKQDPAKEARTFHAQVIIMNHPGQISNGYTPVLDCHTAHIACKFNELKEKVDRRTGKKVEDFPKFLKSGDAGIVELIPTKPLCVESFTDYAPLGRFAVRDMRQTVAVGVIKSVEKSDGSSGKVTKSAQKAAPKKK.

The region spanning 5–242 is the tr-type G domain; it reads KVHINIVVIG…DSIIPPQRPT (238 aa). Residues 14-21 form a G1 region; that stretch reads GHVDSGKS. 14–21 provides a ligand contact to GTP; that stretch reads GHVDSGKS. Residues 70-74 are G2; the sequence is GITID. The tract at residues 91 to 94 is G3; sequence DAPG. GTP-binding positions include 91–95 and 153–156; these read DAPGH and NKMD. The segment at 153 to 156 is G4; sequence NKMD. The tract at residues 194-196 is G5; sequence SGF. Glutamate 301 and glutamate 374 each carry 5-glutamyl glycerylphosphorylethanolamine. The interval 443-463 is disordered; sequence KSDGSSGKVTKSAQKAAPKKK. Residues 446 to 455 are compositionally biased toward polar residues; it reads GSSGKVTKSA.

Belongs to the TRAFAC class translation factor GTPase superfamily. Classic translation factor GTPase family. EF-Tu/EF-1A subfamily.

The protein resides in the cytoplasm. In terms of biological role, this protein promotes the GTP-dependent binding of aminoacyl-tRNA to the A-site of ribosomes during protein biosynthesis. The protein is Elongation factor 1-alpha of Caenorhabditis elegans.